Consider the following 496-residue polypeptide: DNA-dependent metalloprotease SPRTN (496 aa).

Position 1 is an N-acetylmethionine (Met-1). Residues 45-212 form the SprT-like domain; it reads LQALFLQFND…KTCGGTYIKI (168 aa). His-111 provides a ligand contact to Zn(2+). Glu-112 is an active-site residue. Positions 115 and 130 each coordinate Zn(2+). At Lys-230 the chain carries N6-acetyllysine. An SHP-box motif is present at residues 253–261; sequence FSGKGYVLG. Ser-268 carries the post-translational modification Phosphoserine. Residue Lys-303 forms a Glycyl lysine isopeptide (Lys-Gly) (interchain with G-Cter in SUMO2) linkage. A PIP-box motif is present at residues 326–333; it reads QSVLSSYF. Residue Lys-342 forms a Glycyl lysine isopeptide (Lys-Gly) (interchain with G-Cter in SUMO2); alternate linkage. A Glycyl lysine isopeptide (Lys-Gly) (interchain with G-Cter in ubiquitin); alternate cross-link involves residue Lys-342. Residues 346–459 form a disordered region; it reads NVNGSPVKSG…STPRSSGGQR (114 aa). Lys-361 is covalently cross-linked (Glycyl lysine isopeptide (Lys-Gly) (interchain with G-Cter in SUMO2)). Residues 382-403 show a composition bias toward low complexity; it reads SSKVTAPASATVTSAAGTSAAI. Ser-383 bears the Phosphoserine mark. Positions 412-423 match the Nuclear localization signal motif; the sequence is DQFLNKRPRLED. Polar residues-rich tracts occupy residues 426–437 and 445–457; these read ALNNIKEQTQSG and RPTA…SSGG. Residue Lys-431 forms a Glycyl lysine isopeptide (Lys-Gly) (interchain with G-Cter in SUMO2) linkage. A UBZ4-type zinc finger spans residues 461–488; sequence LVNCPVCQGVVLESQINEHLDRCLEGSK. Zn(2+) is bound by residues Cys-464, Cys-467, His-479, and Cys-483.

It belongs to the Spartan family. In terms of assembly, homodimer. Interacts (VIA PIP-box) with PCNA (when ubiquitinated). Interacts (via its SHP-box) with VCP/p97. Interacts with RAD18. Interacts with KCTD13 and POLD3. It depends on Zn(2+) as a cofactor. Autocatalytically cleaved in response to double-stranded DNA-binding: autocatalytic cleavage takes place in trans and leads to inactivation. In terms of processing, monoubiquitinated; monoubiquitination promotes exclusion from chromatin. Deubiquitinated by VCPIP1: deubiquitination is required for subsequent acetylation and recruitment to chromatin and DNA damage sites. Post-translationally, acetylated following deubiquitination by VCPIP1, leading to recruitment to chromatin and DNA damage sites. Phosphorylation by CHEK1 promotes recruitment to chromatin.

It localises to the nucleus. It is found in the chromosome. With respect to regulation, DNA-binding activates the protease activity: single-stranded DNA-binding specifically activates ability to cleave covalent DNA-protein cross-links (DPCs). In contrast, double-stranded DNA-binding specifically activates autocatalytic cleavage, and subsequent inactivation. Functionally, DNA-dependent metalloendopeptidase that mediates the proteolytic cleavage of covalent DNA-protein cross-links (DPCs) during DNA synthesis, thereby playing a key role in maintaining genomic integrity. DPCs are highly toxic DNA lesions that interfere with essential chromatin transactions, such as replication and transcription, and which are induced by reactive agents, such as UV light or formaldehyde. Associates with the DNA replication machinery and specifically removes DPCs during DNA synthesis. Catalyzes proteolytic cleavage of the HMCES DNA-protein cross-link following unfolding by the BRIP1/FANCJ helicase. Acts as a pleiotropic protease for DNA-binding proteins cross-linked with DNA, such as TOP1, TOP2A, histones H3 and H4. Mediates degradation of DPCs that are not ubiquitinated, while it is not able to degrade ubiquitinated DPCs. SPRTN activation requires polymerase collision with DPCs followed by helicase bypass of DPCs. Involved in recruitment of VCP/p97 to sites of DNA damage. Also acts as an activator of CHEK1 during normal DNA replication by mediating proteolytic cleavage of CHEK1, thereby promoting CHEK1 removal from chromatin and subsequent activation. Does not activate CHEK1 in response to DNA damage. May also act as a 'reader' of ubiquitinated PCNA: recruited to sites of UV damage and interacts with ubiquitinated PCNA and RAD18, the E3 ubiquitin ligase that monoubiquitinates PCNA. Facilitates chromatin association of RAD18 and is required for efficient PCNA monoubiquitination, promoting a feed-forward loop to enhance PCNA ubiquitination and translesion DNA synthesis. In Rattus norvegicus (Rat), this protein is DNA-dependent metalloprotease SPRTN.